Here is a 943-residue protein sequence, read N- to C-terminus: 2-oxoglutarate dehydrogenase E1 component (943 aa).

It belongs to the alpha-ketoglutarate dehydrogenase family. In terms of assembly, homodimer. Part of the 2-oxoglutarate dehydrogenase (OGDH) complex composed of E1 (2-oxoglutarate dehydrogenase), E2 (dihydrolipoamide succinyltransferase) and E3 (dihydrolipoamide dehydrogenase); the complex contains multiple copies of the three enzymatic components (E1, E2 and E3). Thiamine diphosphate is required as a cofactor.

It catalyses the reaction N(6)-[(R)-lipoyl]-L-lysyl-[protein] + 2-oxoglutarate + H(+) = N(6)-[(R)-S(8)-succinyldihydrolipoyl]-L-lysyl-[protein] + CO2. E1 component of the 2-oxoglutarate dehydrogenase (OGDH) complex which catalyzes the decarboxylation of 2-oxoglutarate, the first step in the conversion of 2-oxoglutarate to succinyl-CoA and CO(2). This is 2-oxoglutarate dehydrogenase E1 component from Shouchella clausii (strain KSM-K16) (Alkalihalobacillus clausii).